Here is an 850-residue protein sequence, read N- to C-terminus: Mitogen-activated protein kinase kinase kinase 11 (850 aa).

Ser11 is modified (phosphoserine). Residues 16 to 35 (WNGSGSGGGGGTGGVRPEGS) are disordered. Gly residues predominate over residues 17–31 (NGSGSGGGGGTGGVR). Ser35 carries the phosphoserine modification. One can recognise an SH3 domain in the interval 42 to 106 (YANPVWTALF…PSNYVSRGGG (65 aa)). In terms of domain architecture, Protein kinase spans 118-380 (LRLEEVIGIG…ASILQQLEAL (263 aa)). ATP contacts are provided by residues 124–132 (IGIGGFGKV) and Lys145. The Proton acceptor role is filled by Asp242. Position 278 is a phosphothreonine; by autocatalysis (Thr278). Ser282 bears the Phosphoserine; by autocatalysis and MAP4K1 mark. At Ser395 the chain carries Phosphoserine. Leucine-zipper stretches follow at residues 404–425 (IQGL…EEEL) and 439–460 (LRRR…ELTL). Phosphoserine occurs at positions 508 and 525. The segment at 535–644 (QLEPTESGQT…SSGTPKLIQR (110 aa)) is disordered. Residues 538–547 (PTESGQTWGR) are compositionally biased toward polar residues. Ser549, Ser556, and Ser557 each carry phosphoserine. Positions 551–563 (RRLEDSSNGERRA) are enriched in basic and acidic residues. A compositionally biased stretch (low complexity) spans 598–610 (SSPLGSPSTPPAL). Ser655 carries the post-translational modification Phosphoserine. The interval 657-850 (GLGRDLQPPG…QAPWAPEAGP (194 aa)) is disordered. Positions 677 to 693 (TAPPPAQMPSPCPPELP) are enriched in pro residues. Residues 700–711 (LSQTTPDAHSSP) are compositionally biased toward polar residues. Ser709 bears the Phosphoserine mark. At Thr712 the chain carries Phosphothreonine. A phosphoserine mark is found at Ser728, Ser731, Ser743, Ser751, Ser761, Ser773, Ser792, Ser796, and Ser818. The span at 763–776 (PLGLISRPRPSPLR) shows a compositional bias: low complexity. Over residues 790–802 (RPSPLPSPQPAPR) the composition is skewed to pro residues. Residues 803–819 (RAPWTLFPDSDPFWDSP) are compositionally biased toward low complexity.

It belongs to the protein kinase superfamily. STE Ser/Thr protein kinase family. MAP kinase kinase kinase subfamily. As to quaternary structure, homodimer; undergoes dimerization during activation. Interacts with MAP2K4/MKK4 and MAP2K7/MKK7. Found in a complex with SH3RF1, RAC1, MAP2K7/MKK7, MAPK8IP1/JIP1 and MAPK8/JNK1. Mg(2+) is required as a cofactor. Autophosphorylation on serine and threonine residues within the activation loop plays a role in enzyme activation. Thr-278 is likely to be the main autophosphorylation site. Phosphorylation of Ser-556 and Ser-557 is induced by CDC42.

It is found in the cytoplasm. It localises to the cytoskeleton. The protein localises to the microtubule organizing center. Its subcellular location is the centrosome. The catalysed reaction is L-seryl-[protein] + ATP = O-phospho-L-seryl-[protein] + ADP + H(+). The enzyme catalyses L-threonyl-[protein] + ATP = O-phospho-L-threonyl-[protein] + ADP + H(+). Homodimerization via the leucine zipper domains is required for autophosphorylation and subsequent activation. Activates the JUN N-terminal pathway. Required for serum-stimulated cell proliferation and for mitogen and cytokine activation of MAPK14 (p38), MAPK3 (ERK) and MAPK8 (JNK1) through phosphorylation and activation of MAP2K4/MKK4 and MAP2K7/MKK7. Plays a role in mitogen-stimulated phosphorylation and activation of BRAF, but does not phosphorylate BRAF directly. Influences microtubule organization during the cell cycle. The protein is Mitogen-activated protein kinase kinase kinase 11 (Map3k11) of Mus musculus (Mouse).